The sequence spans 393 residues: Formate-dependent phosphoribosylglycinamide formyltransferase (393 aa).

N(1)-(5-phospho-beta-D-ribosyl)glycinamide-binding positions include 22–23 and Glu-82; that span reads EL. ATP-binding positions include Arg-114, Lys-155, 160–165, 195–198, and Glu-203; these read SSGKGQ and EGFI. The ATP-grasp domain occupies 119–308; sequence RLAAEELGLP…EFALHARAIL (190 aa). Mg(2+) contacts are provided by Glu-267 and Glu-279. Residues Asp-286, Lys-356, and 363 to 364 contribute to the N(1)-(5-phospho-beta-D-ribosyl)glycinamide site; that span reads RR.

The protein belongs to the PurK/PurT family. As to quaternary structure, homodimer.

The enzyme catalyses N(1)-(5-phospho-beta-D-ribosyl)glycinamide + formate + ATP = N(2)-formyl-N(1)-(5-phospho-beta-D-ribosyl)glycinamide + ADP + phosphate + H(+). It participates in purine metabolism; IMP biosynthesis via de novo pathway; N(2)-formyl-N(1)-(5-phospho-D-ribosyl)glycinamide from N(1)-(5-phospho-D-ribosyl)glycinamide (formate route): step 1/1. Functionally, involved in the de novo purine biosynthesis. Catalyzes the transfer of formate to 5-phospho-ribosyl-glycinamide (GAR), producing 5-phospho-ribosyl-N-formylglycinamide (FGAR). Formate is provided by PurU via hydrolysis of 10-formyl-tetrahydrofolate. In Pseudomonas aeruginosa (strain LESB58), this protein is Formate-dependent phosphoribosylglycinamide formyltransferase.